We begin with the raw amino-acid sequence, 941 residues long: Coiled-coil and C2 domain-containing protein 1A (941 aa).

Threonine 91 carries the phosphothreonine modification. 2 disordered regions span residues 183 to 248 (TINE…PCSP) and 301 to 336 (SRLP…VPQP). Residues 228–239 (APSTTAQTSAKP) are compositionally biased toward polar residues. The residue at position 247 (serine 247) is a Phosphoserine. The span at 303–318 (LPPPPDQLSPEPPLPA) shows a compositional bias: pro residues. Residues 338–384 (KNLLEALEQRMERYHVAAAQAKAKGDQRKARMHERIVKQYQDAIRAH) are a coiled coil. Positions 428–482 (ANHEEGSDEEEEETPKKNTPAASTAQPKASPSRAPPSGPAPAGKAASKGTSTRAQ) are disordered. Serine 434 bears the Phosphoserine mark. Over residues 467 to 476 (APAGKAASKG) the composition is skewed to low complexity. The stretch at 475 to 508 (KGTSTRAQQQLAFLEGRKKQLLQAALRAKQKNDV) forms a coiled coil. The region spanning 628-762 (RFEQRTFSVI…ETACEVHEIL (135 aa)) is the C2 domain.

It belongs to the CC2D1 family. As to expression, strongly expressed in several brain areas including frontal cortex, cortex, mesencephalon, hippocampus, midbrain and hypothalamus. Also expressed in testis and at low levels in pituitary, liver and kidney. In brain the highest levels are detected in hippocampal pyramidal cells and raphe nuclei.

Its subcellular location is the cytoplasm. It localises to the nucleus. The protein localises to the cytoskeleton. It is found in the microtubule organizing center. The protein resides in the centrosome. Transcription factor that binds specifically to the DRE (dual repressor element) and represses 5-HT1A gene transcription though this element. Mediates HDAC-independent repression of HTR1A promoter. CAMK2G inhibits CC2D1a-induced repression of the HTR1A. May play a role in the altered regulation of 5-HT1A receptors associated with anxiety and major depression. Performs essential function in controlling functional maturation of synapses. The sequence is that of Coiled-coil and C2 domain-containing protein 1A (Cc2d1a) from Rattus norvegicus (Rat).